A 33-amino-acid chain; its full sequence is Photosystem II reaction center protein Psb30 (33 aa).

Residues 5–25 traverse the membrane as a helical segment; it reads LALTLVSLVLVVSAGPLVVVL.

This sequence belongs to the Psb30/Ycf12 family. In terms of assembly, PSII is composed of 1 copy each of membrane proteins PsbA, PsbB, PsbC, PsbD, PsbE, PsbF, PsbH, PsbI, PsbJ, PsbK, PsbL, PsbM, PsbT, PsbX, PsbY, PsbZ, Psb30/Ycf12, peripheral proteins of the oxygen-evolving complex and a large number of cofactors. It forms dimeric complexes.

The protein localises to the plastid. The protein resides in the chloroplast thylakoid membrane. Functionally, a core subunit of photosystem II (PSII), required for optimal photosynthesis, probably helps stabilize the reaction center. This chain is Photosystem II reaction center protein Psb30, found in Chlamydomonas reinhardtii (Chlamydomonas smithii).